The chain runs to 33 residues: RNA-directed RNA polymerase beta chain (33 aa).

In terms of assembly, the polymerase complex is composed of four chains, the three other proteins of the complex (alpha, gamma, and delta chains) are supplied by the host cell.

It carries out the reaction RNA(n) + a ribonucleoside 5'-triphosphate = RNA(n+1) + diphosphate. In terms of biological role, this enzyme is part of the viral RNA-dependent RNA polymerase complex. The polypeptide is RNA-directed RNA polymerase beta chain (Escherichia phage BZ13 (Bacteriophage BZ13)).